The primary structure comprises 67 residues: Small integral membrane protein 20 (67 aa).

Residues 1-6 lie on the Mitochondrial matrix side of the membrane; the sequence is MSRNLR. A helical transmembrane segment spans residues 7–27; sequence TALIFGGFISLIGAAFYPIYF. The Mitochondrial intermembrane segment spans residues 28–67; sequence RPLMRLEEYKKEQAINRAGIVQEDVQPPGLKVWSDPFGRK. Phe64 bears the Phenylalanine amide mark.

In terms of assembly, component of the MITRAC (mitochondrial translation regulation assembly intermediate of cytochrome c oxidase complex) complex, the core components of this complex being COA3/MITRAC12 and COX14. Interacts with COA3/MITRAC12 and COX4I1. Directly interacts with newly synthesized MT-CO1/COX1. As to expression, expressed in the ovary, specifically in granulosa cells of follicles that have passed the primary stage and in oocytes (at protein level).

The protein resides in the mitochondrion inner membrane. It localises to the secreted. Component of the MITRAC (mitochondrial translation regulation assembly intermediate of cytochrome c oxidase complex) complex, that regulates cytochrome c oxidase assembly. Promotes the progression of complex assembly after the association of MT-CO1/COX1 with COX4I1 and COX6C. Chaperone-like assembly factor required to stabilize newly synthesized MT-CO1/COX1 and to prevent its premature turnover. Its function is as follows. Peptide involved in a broad spectrum of regulatory functions. Is a ligand for GPR173. As part of the reproductive cycle, it regulates gonadotropin-releasing hormone (GnRH) signaling in the hypothalamus and pituitary gland which augments the release of luteinizing hormone. Plays a protective role in memory retention through activation of GNRHR. Regulates the secretion of AVP by hypothalamic neurons. Plays a role in the transduction of the itch sensation. Induces anxiolytic effects, reducing behavior associated with anxiety. Regulates food intake as well as satiation and satiety. In the ovary, it regulates follicular growth by stimulating granulosa cell proliferation by increasing the expression of GPR173, CREB1, CYP19A1, KITLG, FSHR, and LHCGR. It also increases the production of estradiol (E2). In the heart, it regulates contractility and relaxation. It also plays a cardioprotective role during ischemia, where it activates the SAFE and RISK pathways. Stimulates the proliferation and differentiation of preadipocytes. In pancreatic islet cells, it induces proliferation of islet cells as well as the production of INS. The protein is Small integral membrane protein 20 (SMIM20) of Homo sapiens (Human).